The sequence spans 165 residues: Thiol peroxidase (165 aa).

In terms of domain architecture, Thioredoxin spans 17–165; it reads PQVGEIVENF…NYEAALAVLA (149 aa). C59 acts as the Cysteine sulfenic acid (-SOH) intermediate in catalysis. A disulfide bridge links C59 with C93.

This sequence belongs to the peroxiredoxin family. Tpx subfamily. In terms of assembly, homodimer.

It catalyses the reaction a hydroperoxide + [thioredoxin]-dithiol = an alcohol + [thioredoxin]-disulfide + H2O. Functionally, thiol-specific peroxidase that catalyzes the reduction of hydrogen peroxide and organic hydroperoxides to water and alcohols, respectively. Plays a role in cell protection against oxidative stress by detoxifying peroxides. The polypeptide is Thiol peroxidase (Haemophilus influenzae (strain ATCC 51907 / DSM 11121 / KW20 / Rd)).